Here is a 317-residue protein sequence, read N- to C-terminus: Protoheme IX farnesyltransferase (317 aa).

The next 8 membrane-spanning stretches (helical) occupy residues 44–64 (IGLILLTLLGGWMGAAAANTF), 93–113 (HASVFAWTLTVVSFLWLWVLC), 116–136 (VLAGLFILLTIFFYIFVYTKY), 143–163 (LNIVWGGAAGCMPVVVGWAVI), 178–198 (AIVLFMVIFFWTPPHTWALAM), 221–241 (VTRQIVWYTVATVLTTFLLIP), 243–263 (ASWIHAIIAVVSGVWFLVMAV), and 288–308 (LAVYFVGLSIDAVLGWETIGG).

This sequence belongs to the UbiA prenyltransferase family. Protoheme IX farnesyltransferase subfamily.

It localises to the cell membrane. It catalyses the reaction heme b + (2E,6E)-farnesyl diphosphate + H2O = Fe(II)-heme o + diphosphate. Its pathway is porphyrin-containing compound metabolism; heme O biosynthesis; heme O from protoheme: step 1/1. In terms of biological role, converts heme B (protoheme IX) to heme O by substitution of the vinyl group on carbon 2 of heme B porphyrin ring with a hydroxyethyl farnesyl side group. The chain is Protoheme IX farnesyltransferase from Corynebacterium diphtheriae (strain ATCC 700971 / NCTC 13129 / Biotype gravis).